A 403-amino-acid chain; its full sequence is Stearoyl-[acyl-carrier-protein] 9-desaturase 4, chloroplastic (403 aa).

The transit peptide at 1–44 directs the protein to the chloroplast; the sequence is MALLLNSTMTVAMKQNPATAVSFMQTTCLGSSFSPPRHLQVSCV. Fe cation-binding residues include E140, E178, H181, E231, E264, and H267.

The protein belongs to the fatty acid desaturase type 2 family. As to quaternary structure, homodimer. Requires Fe(2+) as cofactor. Preferentially expressed in roots.

It is found in the plastid. The protein localises to the chloroplast. The enzyme catalyses octadecanoyl-[ACP] + 2 reduced [2Fe-2S]-[ferredoxin] + O2 + 2 H(+) = (9Z)-octadecenoyl-[ACP] + 2 oxidized [2Fe-2S]-[ferredoxin] + 2 H2O. It functions in the pathway lipid metabolism; fatty acid metabolism. In terms of biological role, converts stearoyl-ACP to oleoyl-ACP by introduction of a cis double bond between carbons 9 and 10 of the acyl chain. The protein is Stearoyl-[acyl-carrier-protein] 9-desaturase 4, chloroplastic (S-ACP-DES4) of Arabidopsis thaliana (Mouse-ear cress).